A 411-amino-acid polypeptide reads, in one-letter code: Proteasome-activating nucleotidase 2 (411 aa).

Residues 35 to 75 are a coiled coil; sequence IVAVNGELQAQLDDVEARREELREEVNRLQRENETLKTASL. ATP contacts are provided by residues 196 to 201 and histidine 335; that span reads GTGKTM. The tract at residues 408 to 411 is docks into pockets in the proteasome alpha-ring to cause gate opening; that stretch reads SYIQ.

Belongs to the AAA ATPase family. As to quaternary structure, homohexamer. The hexameric complex has a two-ring architecture resembling a top hat that caps the 20S proteasome core at one or both ends. Upon ATP-binding, the C-terminus of PAN interacts with the alpha-rings of the proteasome core by binding to the intersubunit pockets.

The protein resides in the cytoplasm. ATPase which is responsible for recognizing, binding, unfolding and translocation of substrate proteins into the archaeal 20S proteasome core particle. Is essential for opening the gate of the 20S proteasome via an interaction with its C-terminus, thereby allowing substrate entry and access to the site of proteolysis. Thus, the C-termini of the proteasomal ATPase function like a 'key in a lock' to induce gate opening and therefore regulate proteolysis. Unfolding activity requires energy from ATP hydrolysis, whereas ATP binding alone promotes ATPase-20S proteasome association which triggers gate opening, and supports translocation of unfolded substrates. The chain is Proteasome-activating nucleotidase 2 from Halobacterium salinarum (strain ATCC 700922 / JCM 11081 / NRC-1) (Halobacterium halobium).